A 478-amino-acid chain; its full sequence is Deoxyribodipyrimidine photo-lyase (478 aa).

The Photolyase/cryptochrome alpha/beta domain maps to 2 to 136; sequence NVNLMWFRND…IINCFHDSVL (135 aa). Glu110 contacts (6R)-5,10-methylene-5,6,7,8-tetrahydrofolate. FAD-binding positions include Tyr227 and 239–243; that span reads TSMLS. Interaction with DNA stretches follow at residues 279–286 and 346–347; these read ELLWREFY and NR. Position 377 to 379 (377 to 379) interacts with FAD; that stretch reads DGD. Gln409 contacts DNA.

The protein belongs to the DNA photolyase class-1 family. Monomer. FAD is required as a cofactor. Requires (6R)-5,10-methylene-5,6,7,8-tetrahydrofolate as cofactor.

It carries out the reaction cyclobutadipyrimidine (in DNA) = 2 pyrimidine residues (in DNA).. Its function is as follows. Involved in repair of UV radiation-induced DNA damage. Catalyzes the light-dependent monomerization (300-600 nm) of cyclobutyl pyrimidine dimers (in cis-syn configuration), which are formed between adjacent bases on the same DNA strand upon exposure to ultraviolet radiation. In Buchnera aphidicola subsp. Baizongia pistaciae (strain Bp), this protein is Deoxyribodipyrimidine photo-lyase (phrB).